A 63-amino-acid chain; its full sequence is ComG operon repressor (63 aa).

Its function is as follows. Negatively regulates the transcription of the comG operon. The sequence is that of ComG operon repressor (comZ) from Bacillus subtilis (strain 168).